A 95-amino-acid polypeptide reads, in one-letter code: Nucleoid-associated protein MARTH_orf159 (95 aa).

Belongs to the YbaB/EbfC family. As to quaternary structure, homodimer.

The protein localises to the cytoplasm. The protein resides in the nucleoid. In terms of biological role, binds to DNA and alters its conformation. May be involved in regulation of gene expression, nucleoid organization and DNA protection. This Metamycoplasma arthritidis (strain 158L3-1) (Mycoplasma arthritidis) protein is Nucleoid-associated protein MARTH_orf159.